A 115-amino-acid chain; its full sequence is Cyclin-dependent kinase 2-associated protein 1 (115 aa).

An interaction with CDK2AP2 region spans residues 20–25 (GSVHSP). Serine 46 carries the phosphoserine; by IKKE modification.

The protein belongs to the CDK2AP family. As to quaternary structure, homodimer. Component of the nucleosome remodeling and deacetylase (NuRD) repressor complex, composed of core proteins MTA1, MTA2, MTA3, RBBP4, RBBP7, HDAC1, HDAC2, MBD2, MBD3, and peripherally associated proteins CDK2AP1, CDK2AP2, GATAD2A, GATAD2B, CHD3, CHD4 and CHD5. The exact stoichiometry of the NuRD complex is unknown, and some subunits such as MBD2 and MBD3, GATAD2A and GATAD2B, and CHD3, CHD4 and CHD5 define mutually exclusive NuRD complexes. Interacts with monomeric unphosphorylated CDK2. Interacts with CDK2AP2. Interacts with GATAD2A. Interacts with HDAC1. Interacts with HDAC2. Interacts with MBD2. Interacts with MBD3. Interacts with RBBP4. Interacts with RBBP7. Phosphorylated in vitro by IKBKE at Ser-46.

It is found in the nucleus. Its subcellular location is the chromosome. Functionally, inhibitor of cyclin-dependent kinase CDK2. Also acts as a component of the histone deacetylase NuRD complex which participates in the remodeling of chromatin. The protein is Cyclin-dependent kinase 2-associated protein 1 (CDK2AP1) of Homo sapiens (Human).